We begin with the raw amino-acid sequence, 197 residues long: TLE family member 5 (197 aa).

Positions 166 to 197 (LSALGSQTHLSKEDKNGHDGDTHQEDDGEKSD) are CCN domain. Positions 170–197 (GSQTHLSKEDKNGHDGDTHQEDDGEKSD) are disordered. Over residues 175 to 197 (LSKEDKNGHDGDTHQEDDGEKSD) the composition is skewed to basic and acidic residues. Serine 196 is modified (phosphoserine).

This sequence belongs to the WD repeat Groucho/TLE family. Homooligomer and heterooligomer with other family members. Binds TCF7 and the NF-kappa-B subunit RELA. Interacts with PHF12. Interacts (via Q domain) with SIX3. Interacts with SIX6. Post-translationally, ubiquitinated by XIAP/BIRC4. Ubiquitously expressed in developing embryos by midgestation, a wide expression is conserved in adult. In mouse, abundantly expressed in muscle, heart and brain.

The protein resides in the nucleus. Transcriptional corepressor. Acts as a dominant repressor towards other family members. Inhibits NF-kappa-B-regulated gene expression. May be required for the initiation and maintenance of the differentiated state. Essential for the transcriptional repressor activity of SIX3 during retina and lens development. The polypeptide is TLE family member 5 (Mus musculus (Mouse)).